A 586-amino-acid polypeptide reads, in one-letter code: YTH domain-containing family protein 2 (586 aa).

3 disordered regions span residues 98 to 128 (LKEK…QPVQ), 141 to 181 (SQDQ…KESP), and 301 to 464 (QGLA…PLVS). Composition is skewed to polar residues over residues 107-128 (ALRQ…QPVQ), 169-181 (TLPT…KESP), and 352-368 (SSQA…TDIQ). The span at 398–418 (CARRHRSSSPRGRSGSHKSRR) shows a compositional bias: basic residues. Residues 421 to 436 (TDSPVSRSTTKSTPSR) show a composition bias toward polar residues. Residues 435–576 (SRARQPGHRD…YCGRDLLRLM (142 aa)) form the YTH domain. Residues 441–458 (GHRDYREYRDDRNRDTKP) are compositionally biased toward basic and acidic residues.

This sequence belongs to the YTHDF family. YTHDF1 subfamily.

Specifically recognizes and binds N6-methyladenosine (m6A)-containing mRNAs, and regulates their stability. M6A is a modification present at internal sites of mRNAs and some non-coding RNAs and plays a role in mRNA stability and processing. Plays a role in pathogenicity towards plant host. The protein is YTH domain-containing family protein 2 of Pyricularia oryzae (strain 70-15 / ATCC MYA-4617 / FGSC 8958) (Rice blast fungus).